A 1437-amino-acid chain; its full sequence is CRISPR-associated endoribonuclease Cas13a (1437 aa).

HEPN-like fold regions lie at residues 460–626 and 1101–1437; these read LNAS…AMFE and EFRD…QLKN. The disordered stretch occupies residues 1377–1419; the sequence is EVKEKKKPSDNNTGKGYSKRDRQQDRKEYDKYKEKKKKEGNFL. The segment covering 1394-1416 has biased composition (basic and acidic residues); sequence SKRDRQQDRKEYDKYKEKKKKEG.

It belongs to the CRISPR-associated endoribonuclease Cas13a family. Requires a divalent metal cation as cofactor.

With respect to regulation, target RNA acts as an activator for non-specific ssRNA degradation. Functionally, CRISPR (clustered regularly interspaced short palindromic repeat), is an adaptive immune system that provides protection against mobile genetic elements (viruses, transposable elements and conjugative plasmids). CRISPR clusters contain sequences complementary to antecedent mobile elements and target invading nucleic acids. Unlike many single-component effectors, this CRISPR-Cas system targets RNA. CRISPR clusters are transcribed from pre-CRISPR RNA (crRNA) and processed into crRNA by this protein. Cleaves linear target ssRNA in a pre-crRNA-dependent fashion, preferentially around A residues. Binding a viable target RNA target activates this protein for non-specific RNA degradation in vitro (called collateral RNA degradation), but it is not very sensitive as it requires nanomolar levels of viable target RNA. In Lachnospiraceae bacterium (strain NK4A179), this protein is CRISPR-associated endoribonuclease Cas13a.